An 824-amino-acid polypeptide reads, in one-letter code: Translation initiation factor IF-2 (824 aa).

Residues 1-234 (MSDQDGKKPL…RQKAMGGSVD (234 aa)) form a disordered region. 2 stretches are compositionally biased toward basic and acidic residues: residues 59–75 (GGKRDKSVPDAEMDRRL) and 82–144 (KARE…RRNA). The segment covering 145 to 159 (PPEAAAPAVDPAAAA) has biased composition (low complexity). Basic and acidic residues predominate over residues 170 to 186 (ARREPERDNKRENRSRG). In terms of domain architecture, tr-type G spans 321–491 (PRPPVITIMG…ALQAELLELK (171 aa)). Positions 330-337 (GHVDHGKT) are G1. 330–337 (GHVDHGKT) contacts GTP. The interval 355-359 (GITQH) is G2. The segment at 377–380 (DTPG) is G3. GTP contacts are provided by residues 377–381 (DTPGH) and 431–434 (NKID). The interval 431–434 (NKID) is G4. Residues 467–469 (SAM) are G5.

This sequence belongs to the TRAFAC class translation factor GTPase superfamily. Classic translation factor GTPase family. IF-2 subfamily.

The protein localises to the cytoplasm. In terms of biological role, one of the essential components for the initiation of protein synthesis. Protects formylmethionyl-tRNA from spontaneous hydrolysis and promotes its binding to the 30S ribosomal subunits. Also involved in the hydrolysis of GTP during the formation of the 70S ribosomal complex. The sequence is that of Translation initiation factor IF-2 from Jannaschia sp. (strain CCS1).